Here is a 309-residue protein sequence, read N- to C-terminus: MQCVETNNLKQLLEQVKPYTKKGKLATYIPELGNANPDDLGIAIYHKETEYVHAGSSQMLFTLQSISKVITLALALLDRGEEYVFSKVGMEPTGDPFNSIIKLETTSPSKPLNPMINAGALAITSMLKGANNEEKIERILNFVREITDNPTIHYSAKVATSELETAYLNRSLCYYMKQNGIIDNDIEELMDLYTRQCAIEVNCIDLARIGLIFAMDGYDPYKQKQIIPKHITKICKTFMVTCGMYNESGEFAIRVGIPAKSGVAGGIFGCVKGEMGIGIFGPALDENGNSIAGFKILELLSAQEGWSIF.

Ser65, Asn117, Glu162, Asn169, Tyr193, Tyr245, and Val263 together coordinate substrate.

Belongs to the glutaminase family. As to quaternary structure, homotetramer.

It carries out the reaction L-glutamine + H2O = L-glutamate + NH4(+). In Bacillus cytotoxicus (strain DSM 22905 / CIP 110041 / 391-98 / NVH 391-98), this protein is Glutaminase.